We begin with the raw amino-acid sequence, 297 residues long: Ribosomal RNA small subunit methyltransferase A (297 aa).

Residues Asn31, Leu33, Gly58, Glu79, Asp104, and Asn129 each contribute to the S-adenosyl-L-methionine site.

The protein belongs to the class I-like SAM-binding methyltransferase superfamily. rRNA adenine N(6)-methyltransferase family. RsmA subfamily.

The protein localises to the cytoplasm. It carries out the reaction adenosine(1518)/adenosine(1519) in 16S rRNA + 4 S-adenosyl-L-methionine = N(6)-dimethyladenosine(1518)/N(6)-dimethyladenosine(1519) in 16S rRNA + 4 S-adenosyl-L-homocysteine + 4 H(+). Its function is as follows. Specifically dimethylates two adjacent adenosines (A1518 and A1519) in the loop of a conserved hairpin near the 3'-end of 16S rRNA in the 30S particle. May play a critical role in biogenesis of 30S subunits. This chain is Ribosomal RNA small subunit methyltransferase A, found in Staphylococcus aureus (strain Newman).